A 348-amino-acid chain; its full sequence is Glucose 1-dehydrogenase 2 (348 aa).

Cysteine 39 serves as a coordination point for Zn(2+). Threonine 41 lines the substrate pocket. The Zn(2+) site is built by histidine 64 and glutamate 65. Substrate contacts are provided by glutamate 110 and glutamate 146. Glutamate 146 contacts Zn(2+). NADP(+)-binding positions include 178-181 (AGPV), 260-262 (LGV), and 289-291 (SVN). Asparagine 291 is a substrate binding site.

This sequence belongs to the zinc-containing alcohol dehydrogenase family. Glucose 1-dehydrogenase subfamily. The cofactor is Zn(2+).

It carries out the reaction D-glucose + NAD(+) = D-glucono-1,5-lactone + NADH + H(+). The catalysed reaction is D-glucose + NADP(+) = D-glucono-1,5-lactone + NADPH + H(+). Functionally, catalyzes the NAD(P)(+)-dependent oxidation of D-glucose to D-gluconate via gluconolactone. Can utilize both NAD(+) and NADP(+) as electron acceptor. Is involved in the degradation of glucose through a non-phosphorylative variant of the Entner-Doudoroff pathway. The sequence is that of Glucose 1-dehydrogenase 2 from Vulcanisaeta moutnovskia (strain 768-28).